The sequence spans 183 residues: Bifunctional protein PyrR (183 aa).

Residues 102–114 (VVLVDDVLFSGRT) carry the PRPP-binding motif.

This sequence belongs to the purine/pyrimidine phosphoribosyltransferase family. PyrR subfamily.

The enzyme catalyses UMP + diphosphate = 5-phospho-alpha-D-ribose 1-diphosphate + uracil. Regulates the transcription of the pyrimidine nucleotide (pyr) operon in response to exogenous pyrimidines. In terms of biological role, also displays a weak uracil phosphoribosyltransferase activity which is not physiologically significant. The protein is Bifunctional protein PyrR of Leifsonia xyli subsp. xyli (strain CTCB07).